Reading from the N-terminus, the 171-residue chain is Co-chaperone protein HscB homolog (171 aa).

The J domain maps to 2–69; the sequence is NHFELFDLPV…DSRAAYLLSL (68 aa).

The protein belongs to the HscB family. Interacts with HscA and stimulates its ATPase activity.

Functionally, co-chaperone involved in the maturation of iron-sulfur cluster-containing proteins. Seems to help targeting proteins to be folded toward HscA. This is Co-chaperone protein HscB homolog from Acinetobacter baylyi (strain ATCC 33305 / BD413 / ADP1).